The primary structure comprises 393 residues: Arrestin-C (393 aa).

The segment covering 371–386 (FARQEDGGEEKQKALA) has biased composition (basic and acidic residues). Residues 371–393 (FARQEDGGEEKQKALAEEGDEGS) are disordered.

This sequence belongs to the arrestin family. As to quaternary structure, homodimer; disulfide-linked in response to retinal illumination. Interacts with CXCR4; the interaction is dependent on the C-terminal phosphorylation of CXCR4 and modulates the calcium ion mobilization activity of CXCR4.

The protein localises to the photoreceptor inner segment. Its subcellular location is the cell projection. It localises to the cilium. The protein resides in the photoreceptor outer segment. Its function is as follows. May play a role in an as yet undefined retina-specific signal transduction. Could bind to photoactivated-phosphorylated red/green opsins. The chain is Arrestin-C (ARR3) from Ictidomys tridecemlineatus (Thirteen-lined ground squirrel).